A 61-amino-acid polypeptide reads, in one-letter code: Large ribosomal subunit protein bL32 (61 aa).

Positions 1-19 (MAHPKRRQSKTRTAKRRTH) are enriched in basic residues. Residues 1–20 (MAHPKRRQSKTRTAKRRTHD) are disordered.

Belongs to the bacterial ribosomal protein bL32 family.

This chain is Large ribosomal subunit protein bL32, found in Bacteroides fragilis (strain YCH46).